The sequence spans 296 residues: Light-independent protochlorophyllide reductase iron-sulfur ATP-binding protein (296 aa).

ATP-binding positions include 39-44 and K68; that span reads GIGKST. S43 is a Mg(2+) binding site. [4Fe-4S] cluster-binding residues include C124 and C158. Residue 209 to 210 participates in ATP binding; it reads NR.

It belongs to the NifH/BchL/ChlL family. Homodimer. Protochlorophyllide reductase is composed of three subunits; ChlL, ChlN and ChlB. [4Fe-4S] cluster serves as cofactor.

It catalyses the reaction chlorophyllide a + oxidized 2[4Fe-4S]-[ferredoxin] + 2 ADP + 2 phosphate = protochlorophyllide a + reduced 2[4Fe-4S]-[ferredoxin] + 2 ATP + 2 H2O. It participates in porphyrin-containing compound metabolism; chlorophyll biosynthesis (light-independent). Functionally, component of the dark-operative protochlorophyllide reductase (DPOR) that uses Mg-ATP and reduced ferredoxin to reduce ring D of protochlorophyllide (Pchlide) to form chlorophyllide a (Chlide). This reaction is light-independent. The L component serves as a unique electron donor to the NB-component of the complex, and binds Mg-ATP. This Prochlorococcus marinus (strain MIT 9303) protein is Light-independent protochlorophyllide reductase iron-sulfur ATP-binding protein.